The following is a 693-amino-acid chain: Methionine--tRNA ligase (693 aa).

A 'HIGH' region motif is present at residues 12-22 (PYANGPLHLGH). Residues cysteine 143, cysteine 146, cysteine 156, and cysteine 159 each coordinate Zn(2+). Positions 330–334 (KMSKS) match the 'KMSKS' region motif. Lysine 333 is an ATP binding site. Positions 557–576 (APTAKNEAAKPAAPAAAKTE) are disordered. The 104-residue stretch at 590-693 (DFAKLDLRIG…SGAQPGMPVR (104 aa)) folds into the tRNA-binding domain.

The protein belongs to the class-I aminoacyl-tRNA synthetase family. MetG type 1 subfamily. Homodimer. Requires Zn(2+) as cofactor.

Its subcellular location is the cytoplasm. The catalysed reaction is tRNA(Met) + L-methionine + ATP = L-methionyl-tRNA(Met) + AMP + diphosphate. In terms of biological role, is required not only for elongation of protein synthesis but also for the initiation of all mRNA translation through initiator tRNA(fMet) aminoacylation. The polypeptide is Methionine--tRNA ligase (Stenotrophomonas maltophilia (strain R551-3)).